Here is a 163-residue protein sequence, read N- to C-terminus: Regulatory protein RecX (163 aa).

The disordered stretch occupies residues 1–21; that stretch reads MSDAEDIPTGRKRRPREQTPV.

The protein belongs to the RecX family.

The protein localises to the cytoplasm. Modulates RecA activity. The protein is Regulatory protein RecX of Stenotrophomonas maltophilia (strain K279a).